An 85-amino-acid chain; its full sequence is Teretoxin Tan9.6 (85 aa).

The signal sequence occupies residues 1-21 (MMSKTGALLLTFMILVLFSMA). The propeptide occupies 22–52 (AADALGERFEDHEQKIREQDAGVGLLSLMGR).

In terms of processing, contains 3 disulfide bonds. As to expression, expressed by the venom duct.

The protein localises to the secreted. In Terebra anilis (Auger snail), this protein is Teretoxin Tan9.6.